The chain runs to 294 residues: NAD kinase (294 aa).

The active-site Proton acceptor is the Asp74. Residues 74-75 (DG), 148-149 (NE), His159, Arg176, Asp178, 189-194 (TAYSLS), and Gln249 contribute to the NAD(+) site.

It belongs to the NAD kinase family. It depends on a divalent metal cation as a cofactor.

The protein resides in the cytoplasm. It catalyses the reaction NAD(+) + ATP = ADP + NADP(+) + H(+). Its function is as follows. Involved in the regulation of the intracellular balance of NAD and NADP, and is a key enzyme in the biosynthesis of NADP. Catalyzes specifically the phosphorylation on 2'-hydroxyl of the adenosine moiety of NAD to yield NADP. The polypeptide is NAD kinase (Vibrio vulnificus (strain CMCP6)).